Here is a 218-residue protein sequence, read N- to C-terminus: Mitochondrial fission factor (218 aa).

At 1–198 the chain is on the cytoplasmic side; it reads MAEISRIQYE…ENKERAKREM (198 aa). Position 89 is a phosphothreonine (T89). Phosphoserine is present on residues S129, S131, S146, and S171. Positions 167–198 form a coiled coil; that stretch reads VDAASLRRQIIKLNRRLQLLEEENKERAKREM. A helical; Anchor for type IV membrane protein transmembrane segment spans residues 199–216; sequence VMYSITVAFWLLNSWLWF. Residues 217–218 are Mitochondrial intermembrane-facing; it reads RR.

The protein belongs to the Tango11 family. Homodimer. Interacts with DNM1L. Interacts with C11orf65/MFI; the interaction inhibits MFF interaction with DNM1L.

It is found in the mitochondrion outer membrane. The protein localises to the peroxisome. Its subcellular location is the cytoplasmic vesicle. The protein resides in the secretory vesicle. It localises to the synaptic vesicle. In terms of biological role, plays a role in mitochondrial and peroxisomal fission. Promotes the recruitment and association of the fission mediator dynamin-related protein 1 (DNM1L) to the mitochondrial surface. May be involved in regulation of synaptic vesicle membrane dynamics by recruitment of DNM1L to clathrin-containing vesicles. This chain is Mitochondrial fission factor (MFF), found in Bos taurus (Bovine).